A 434-amino-acid polypeptide reads, in one-letter code: MRLATDLETPRRVAVLSVHTSPLAQPGTGDAGGMNVYVLQTALQLARRGVEVEVFTRATSSADAPVVPVAPGVLVRNVVAGPFEGLDKNDLPTQLCAFTAGVLRAEATHEPGYYDVVHSHYWLSGQVGWLARDRWAVPLVHTAHTLAAVKNAALAAGDAPEPPLRAVGEQQVVDEADRLIVNTEVEAQQLVSLHNADRSRIDVVHPGVDLDVFTPGSRDAARAVFGLPTDQKIVAFVGRIQPLKAPDILLRAAAKLPGVRVLIAGGPSGSGLAQPDTLVRLADELGISDRVTFLPPQSREQLVNVYRAADLVAVPSYSESFGLVAVEAQACGTPVVAAAVGGLPVAVADGVSGALVDGHDIGDWADTISEVLDREPAALSRASAEHAAQFSWAHTVDALLASYSRAMSDYRARHPRPAARRSGRRFSMRRGVRT.

Residue H19 coordinates 1D-myo-inositol 3-phosphate. UDP-N-acetyl-alpha-D-glucosamine-binding positions include 25 to 26 (QP) and G33. 1D-myo-inositol 3-phosphate is bound by residues 30–35 (DAGGMN), K88, Y121, T145, and R165. UDP-N-acetyl-alpha-D-glucosamine contacts are provided by R239, K244, and Q297. The Mg(2+) site is built by Y306, R307, and A309. UDP-N-acetyl-alpha-D-glucosamine contacts are provided by E319 and E327. Mg(2+) is bound at residue T333. The segment at 414-434 (HPRPAARRSGRRFSMRRGVRT) is disordered.

This sequence belongs to the glycosyltransferase group 1 family. MshA subfamily. As to quaternary structure, homodimer.

It catalyses the reaction 1D-myo-inositol 3-phosphate + UDP-N-acetyl-alpha-D-glucosamine = 1D-myo-inositol 2-acetamido-2-deoxy-alpha-D-glucopyranoside 3-phosphate + UDP + H(+). Its function is as follows. Catalyzes the transfer of a N-acetyl-glucosamine moiety to 1D-myo-inositol 3-phosphate to produce 1D-myo-inositol 2-acetamido-2-deoxy-glucopyranoside 3-phosphate in the mycothiol biosynthesis pathway. This is D-inositol 3-phosphate glycosyltransferase (mshA) from Mycolicibacterium smegmatis (strain ATCC 700084 / mc(2)155) (Mycobacterium smegmatis).